Reading from the N-terminus, the 409-residue chain is NADH-quinone oxidoreductase subunit D (409 aa).

Belongs to the complex I 49 kDa subunit family. As to quaternary structure, NDH-1 is composed of 14 different subunits. Subunits NuoB, C, D, E, F, and G constitute the peripheral sector of the complex.

The protein resides in the cell inner membrane. It carries out the reaction a quinone + NADH + 5 H(+)(in) = a quinol + NAD(+) + 4 H(+)(out). NDH-1 shuttles electrons from NADH, via FMN and iron-sulfur (Fe-S) centers, to quinones in the respiratory chain. The immediate electron acceptor for the enzyme in this species is believed to be ubiquinone. Couples the redox reaction to proton translocation (for every two electrons transferred, four hydrogen ions are translocated across the cytoplasmic membrane), and thus conserves the redox energy in a proton gradient. The polypeptide is NADH-quinone oxidoreductase subunit D (Helicobacter acinonychis (strain Sheeba)).